Consider the following 109-residue polypeptide: Homeobox protein E30 (109 aa).

Basic residues predominate over residues 1-12 (GPRTRRVKRSHN). Residues 1 to 27 (GPRTRRVKRSHNGKNGSPEEKRPRTAF) form a disordered region. Residues 20–79 (EKRPRTAFSAEQLARLKREFAENRYLTERRRQQLSRDLGLTEAQIKIWFQNKRAKIKKAS) constitute a DNA-binding region (homeobox).

The protein belongs to the engrailed homeobox family.

Its subcellular location is the nucleus. This is Homeobox protein E30 from Apis mellifera (Honeybee).